A 1368-amino-acid polypeptide reads, in one-letter code: DNA-directed RNA polymerase subunit beta (1368 aa).

It belongs to the RNA polymerase beta chain family. In terms of assembly, the RNAP catalytic core consists of 2 alpha, 1 beta, 1 beta' and 1 omega subunit. When a sigma factor is associated with the core the holoenzyme is formed, which can initiate transcription.

The enzyme catalyses RNA(n) + a ribonucleoside 5'-triphosphate = RNA(n+1) + diphosphate. Its function is as follows. DNA-dependent RNA polymerase catalyzes the transcription of DNA into RNA using the four ribonucleoside triphosphates as substrates. The protein is DNA-directed RNA polymerase subunit beta of Janthinobacterium sp. (strain Marseille) (Minibacterium massiliensis).